A 215-amino-acid chain; its full sequence is Fibroblast growth factor 10 (215 aa).

The signal sequence occupies residues M1–C36. The interval T49–H73 is disordered. N50 is a glycosylation site (N-linked (GlcNAc...) asparagine). A compositionally biased stretch (low complexity) spans S51–S69. N203 is a glycosylation site (N-linked (GlcNAc...) asparagine).

The protein belongs to the heparin-binding growth factors family. Interacts with FGFR1 and FGFR2. Interacts with FGFBP1. In terms of tissue distribution, preferentially expressed in the lung in adults.

The protein resides in the secreted. In terms of biological role, plays an important role in the regulation of embryonic development, cell proliferation and cell differentiation. Required for normal branching morphogenesis. May play a role in wound healing. In Rattus norvegicus (Rat), this protein is Fibroblast growth factor 10 (Fgf10).